A 640-amino-acid polypeptide reads, in one-letter code: PAN2-PAN3 deadenylation complex subunit PAN3 (640 aa).

The C3H1-type zinc-finger motif lies at 17 to 46 (ENKDILCRNVLIYGHCRYEDQGCTYNHDQN). Composition is skewed to polar residues over residues 43–53 (HDQNKNSSQPE) and 63–87 (DSPS…SQAA). The interval 43-101 (HDQNKNSSQPEAPSKKMFNVDSPSFTPSGQSTVLPKKTTLSSQAASAAPFTPRGGGTPT) is disordered. Positions 237 to 498 (QVIPNSGLPQ…TIEHFMTGIA (262 aa)) are pseudokinase domain. ATP-binding positions include Asn263, Arg288, 338–345 (DFHPLSKT), and 397–398 (SK). Residues 499-537 (SQMTTFFDLALQDNDEKLFHLAREVENGRIARSLMKLLT) adopt a coiled-coil conformation. The knob domain stretch occupies residues 538-640 (ILERGDYDGV…SKTGAPGANT (103 aa)).

This sequence belongs to the protein kinase superfamily. PAN3 family. As to quaternary structure, homodimer. Forms a heterotrimer with a catalytic subunit PAN2 to form the poly(A)-nuclease (PAN) deadenylation complex. Interacts (via PAM-2 motif) with poly(A)-binding protein PAB1 (via PABC domain), conferring substrate specificity of the enzyme complex.

The protein resides in the cytoplasm. Regulatory subunit of the poly(A)-nuclease (PAN) deadenylation complex, one of two cytoplasmic mRNA deadenylases involved in mRNA turnover. PAN specifically shortens poly(A) tails of RNA and the activity is stimulated by poly(A)-binding protein PAB1. PAN deadenylation is followed by rapid degradation of the shortened mRNA tails by the CCR4-NOT complex. Deadenylated mRNAs are then degraded by two alternative mechanisms, namely exosome-mediated 3'-5' exonucleolytic degradation, or deadenylation-dependent mRNA decaping and subsequent 5'-3' exonucleolytic degradation by XRN1. May also be involved in post-transcriptional maturation of mRNA poly(A) tails. PAN3 acts as a positive regulator for PAN activity, recruiting the catalytic subunit PAN2 to mRNA via its interaction with RNA and with PAB1. The chain is PAN2-PAN3 deadenylation complex subunit PAN3 from Chaetomium thermophilum (strain DSM 1495 / CBS 144.50 / IMI 039719) (Thermochaetoides thermophila).